Here is a 161-residue protein sequence, read N- to C-terminus: Type-1 angiotensin II receptor-associated protein (161 aa).

Residues 1 to 26 (MELPAVNLKVILLVHWLLTTWGCLVF) are Extracellular-facing. Residues 27 to 47 (SSSYAWGNFTILALGVWAVAQ) traverse the membrane as a helical segment. At 48–53 (RDSIDA) the chain is on the cytoplasmic side. A helical transmembrane segment spans residues 54–74 (IGMFLGGLVATIFLDIIYISI). At 75–86 (FYSSVATGDTGR) the chain is on the extracellular side. Residues 87–107 (FGAGMAILSLLLKPFSCCLVY) traverse the membrane as a helical segment. Residues 108-161 (HMHRERGGELPLRPDFFGPSQEHSAYQTIDSSSDAAADPFASLENKGQAVPRGY) lie on the Cytoplasmic side of the membrane. An interaction with AGTR1 region spans residues 110 to 122 (HRERGGELPLRPD). Residue Ser127 is modified to Phosphoserine. Residue Thr135 is modified to Phosphothreonine. Phosphoserine is present on Ser138.

Interacts with RACK1, and with the C-terminal region of AGTR1. In terms of tissue distribution, ubiquitous but more abundant in kidney, testis and heart.

The protein resides in the endoplasmic reticulum membrane. The protein localises to the golgi apparatus membrane. It localises to the cytoplasmic vesicle membrane. Its function is as follows. Appears to be a negative regulator of type-1 angiotensin II receptor-mediated signaling by regulating receptor internalization as well as mechanism of receptor desensitization such as phosphorylation. Also induces a decrease in angiotensin II-stimulated transcriptional activity. May play a role of negative regulator in cardiomyocyte hypertrophy induced by angiotensin II through an inhibition of p38 mitogen-activated protein kinase pathway. The polypeptide is Type-1 angiotensin II receptor-associated protein (Agtrap) (Mus musculus (Mouse)).